The primary structure comprises 310 residues: Protein YIP5 (310 aa).

Residues 1-84 (MPSNNSSFLD…VIGQNDNDGL (84 aa)) form a disordered region. A compositionally biased stretch (acidic residues) spans 10–22 (DIDDDLEGVDDFG). Residues 35–57 (DSPNMNNSTAGKGSEFYNTTGSK) are compositionally biased toward polar residues. A Phosphoserine modification is found at S60. The next 5 membrane-spanning stretches (helical) occupy residues 131-151 (TDLY…FTMS), 181-201 (LHSI…TMQV), 220-240 (LISV…ILNI), 249-269 (TVQA…SYFL), and 290-310 (SIIV…FIIF).

Belongs to the YIP1 family. In terms of assembly, interacts with SNX3, TVP18, TVP23, YIP1 and YIP4. Interacts with SEC4; The C-terminal cysteines in the Rab GTPase SEC4 are essential for the interaction. Interacts with YPT1, YPT6, YPT7, YPT10, YPT11, YPT31, YPT32 and YPT52; These proteins are all Rab GTPases.

The protein resides in the membrane. In terms of biological role, possible role in vesicle-mediated transport. May be involved in proper membrane localization of Rab GTPases. This Saccharomyces cerevisiae (strain ATCC 204508 / S288c) (Baker's yeast) protein is Protein YIP5 (YIP5).